Here is a 413-residue protein sequence, read N- to C-terminus: Protein PHR1-LIKE 1 (413 aa).

Disordered stretches follow at residues 171–196 (SEPN…TPFL) and 208–233 (QQQM…SKQR). 2 stretches are compositionally biased toward polar residues: residues 181 to 191 (DSSSHNPNSEI) and 208 to 231 (QQQM…ATSK). The HTH myb-type domain occupies 228–288 (ATSKQRMRWT…HLQKYRTARY (61 aa)). Positions 259 to 284 (PKAVLKLLNNPGLTIYHVKSHLQKYR) form a DNA-binding region, H-T-H motif. The coiled coil stretch occupies residues 322 to 342 (TQALRLQMEVQKRLHEQLEIQ). Residues 335 to 340 (LHEQLE) carry the LHEQLE motif. The disordered stretch occupies residues 363-413 (QQKIQDNKSSSSEASPKQCNGSFAEVEVGLETLTGDQNESASASRKRVRED). Composition is skewed to polar residues over residues 369–383 (NKSS…QCNG) and 396–405 (TGDQNESASA).

It belongs to the MYB-CC family. As to quaternary structure, homodimers and heterodimers. Interacts with MED25. Does not interact with PHL2 or PHL3. Expressed in shoots and roots.

It localises to the nucleus. Functionally, transcription factor acting as central integrator of phosphate starvation responses. Regulates FER1 expression upon phosphate starvation, linking iron and phosphate homeostasis. This chain is Protein PHR1-LIKE 1 (PHL1), found in Arabidopsis thaliana (Mouse-ear cress).